The chain runs to 351 residues: Peptide chain release factor 1 (351 aa).

Glutamine 229 is modified (N5-methylglutamine).

Belongs to the prokaryotic/mitochondrial release factor family. In terms of processing, methylated by PrmC. Methylation increases the termination efficiency of RF1.

The protein resides in the cytoplasm. Functionally, peptide chain release factor 1 directs the termination of translation in response to the peptide chain termination codons UAG and UAA. The polypeptide is Peptide chain release factor 1 (Cereibacter sphaeroides (strain KD131 / KCTC 12085) (Rhodobacter sphaeroides)).